The following is a 674-amino-acid chain: Xaa-Pro aminopeptidase 2 (674 aa).

Residues 1 to 22 form the signal peptide; the sequence is MAQAYWQCYPWLVLLCACAWSY. Asn65 carries N-linked (GlcNAc...) asparagine glycosylation. Residue Arg116 coordinates substrate. N-linked (GlcNAc...) asparagine glycosylation is found at Asn270, Asn278, and Asn293. A substrate-binding site is contributed by His430. Zn(2+)-binding residues include Asp450, Asp461, and His524. His524, His533, and Glu555 together coordinate substrate. Positions 555 and 569 each coordinate Zn(2+). Residue Ala650 is the site of GPI-anchor amidated alanine attachment. The propeptide at 651-674 is removed in mature form; it reads RAPHIISWTSLWVASALAILSWSS.

It belongs to the peptidase M24B family. Homotrimer. Requires Zn(2+) as cofactor. N-glycosylated. In terms of tissue distribution, strongly expressed in small intestine, heart and lung. Also detected in testis, skeletal muscle, spleen, liver, kidney, brain, uterus, eye, lymph node, thymus, stomach, prostate and bone marrow.

Its subcellular location is the cell membrane. It catalyses the reaction Release of any N-terminal amino acid, including proline, that is linked to proline, even from a dipeptide or tripeptide.. Its function is as follows. Membrane-bound metalloprotease which catalyzes the removal of a penultimate prolyl residue from the N-termini of peptides, such as Arg-Pro-Pro. May play a role in the metabolism of the vasodilator bradykinin. This is Xaa-Pro aminopeptidase 2 from Mus musculus (Mouse).